Reading from the N-terminus, the 77-residue chain is Large ribosomal subunit protein bL28 (77 aa).

This sequence belongs to the bacterial ribosomal protein bL28 family.

This is Large ribosomal subunit protein bL28 from Verminephrobacter eiseniae (strain EF01-2).